An 84-amino-acid chain; its full sequence is M-zodatoxin-Lt2b (84 aa).

The N-terminal stretch at 1-22 is a signal peptide; it reads MKYFVIALALAVALVCIAESTA. Residues 23–58 constitute a propeptide that is removed on maturation; sequence YEVNEELENELDDLDDAAWLAVAEELQGLEDFEESR. A Processing quadruplet motif motif is present at residues 55–58; sequence EESR.

Post-translationally, cleavage of the propeptide depends on the processing quadruplet motif (XXXR, with at least one of X being E). In terms of tissue distribution, expressed by the venom gland.

It localises to the secreted. Has antimicrobial activity against both Gram-positive and Gram-negative bacteria, and yeasts. Also has a strong hemolytic activity against rabbit erythrocytes. Causes paralysis, but is not lethal when injected into insect (M.domestica) larvae. The polypeptide is M-zodatoxin-Lt2b (Lachesana tarabaevi (Spider)).